A 52-amino-acid chain; its full sequence is Rubredoxin (52 aa).

Positions Met1–Ala52 constitute a Rubredoxin-like domain. Residues Cys6, Cys9, Cys39, and Cys42 each contribute to the Fe cation site.

This sequence belongs to the rubredoxin family. Fe(3+) is required as a cofactor.

The protein resides in the cytoplasm. In terms of biological role, rubredoxin is a small nonheme, iron protein lacking acid-labile sulfide. Its single Fe, chelated to 4 Cys, functions as an electron acceptor and may also stabilize the conformation of the molecule. Electron acceptor for cytoplasmic lactate dehydrogenase. This is Rubredoxin (rub) from Nitratidesulfovibrio vulgaris (strain ATCC 29579 / DSM 644 / CCUG 34227 / NCIMB 8303 / VKM B-1760 / Hildenborough) (Desulfovibrio vulgaris).